The chain runs to 198 residues: MPKIEMEPLRRRELIDAAIRTIGQRGSLDVTVAQIAHEAGVSPALAHHYFGGKDKLILATMRHLLRELGRDLNAAIKQANTPHERIAAIIAVNFSAAQFAQETIAAWLTFYVHAQQSDDIKRLLRIYARRLHSNLVFALEQLTSRARANRIAEGAGAMIDGLYIRHALGADAPDAASAIALVEDYIAIQLSGQPSAEN.

The HTH tetR-type domain maps to 8-68; it reads PLRRRELIDA…ATMRHLLREL (61 aa). A DNA-binding region (H-T-H motif) is located at residues 31–50; that stretch reads TVAQIAHEAGVSPALAHHYF.

Its pathway is amine and polyamine biosynthesis; betaine biosynthesis via choline pathway [regulation]. In terms of biological role, repressor involved in the biosynthesis of the osmoprotectant glycine betaine. It represses transcription of the choline transporter BetT and the genes of BetAB involved in the synthesis of glycine betaine. This is HTH-type transcriptional regulator BetI from Brucella canis (strain ATCC 23365 / NCTC 10854 / RM-666).